The following is a 369-amino-acid chain: Phosphoribosyl pyrophosphate synthase-associated protein 2 (369 aa).

The residue at position 1 (M1) is an N-acetylmethionine. T5 is subject to Phosphothreonine. Phosphoserine is present on residues S219, S227, and S233.

Belongs to the ribose-phosphate pyrophosphokinase family. As to quaternary structure, binds to PRPS1 and PRPS2. As to expression, ubiquitous.

Its function is as follows. Seems to play a negative regulatory role in 5-phosphoribose 1-diphosphate synthesis. In Homo sapiens (Human), this protein is Phosphoribosyl pyrophosphate synthase-associated protein 2 (PRPSAP2).